Consider the following 308-residue polypeptide: NADH-cytochrome b5 reductase 1 (308 aa).

A helical membrane pass occupies residues 10–27; the sequence is INGVYIPSALLIFGTTII. One can recognise an FAD-binding FR-type domain in the interval 59–164; it reads TEFQNFVLKD…RGPKGAMVYT (106 aa). FAD contacts are provided by residues 144-159 and 170-207; these read TTLR…GPKG and HIGM…QIDL.

It belongs to the flavoprotein pyridine nucleotide cytochrome reductase family. Monomer. Component of the 2-(3-amino-3-carboxypropyl)histidine synthase complex composed of DPH1, DPH2, DPH3 and a NADH-dependent reductase, predominantly CBR1. FAD serves as cofactor.

It localises to the mitochondrion outer membrane. The catalysed reaction is 2 Fe(III)-[cytochrome b5] + NADH = 2 Fe(II)-[cytochrome b5] + NAD(+) + H(+). It carries out the reaction 2 Fe(3+)-[Dph3] + NADH = 2 Fe(2+)-[Dph3] + NAD(+) + H(+). It functions in the pathway protein modification; peptidyl-diphthamide biosynthesis. Functionally, NADH-dependent reductase for DPH3 and cytochrome b5. Required for the first step of diphthamide biosynthesis, a post-translational modification of histidine which occurs in elongation factor 2. DPH1 and DPH2 transfer a 3-amino-3-carboxypropyl (ACP) group from S-adenosyl-L-methionine (SAM) to a histidine residue, the reaction is assisted by a reduction system comprising DPH3 and a NADH-dependent reductase, predominantly CBR1. By reducing DPH3, also involved in the formation of the tRNA wobble base modification mcm5s 2U (5-methoxycarbonylmethyl-2-thiouridine), mediated by the elongator complex. The cytochrome b5/NADH cytochrome b5 reductase electron transfer system supports the catalytic activity of several sterol biosynthetic enzymes. The sequence is that of NADH-cytochrome b5 reductase 1 (CBR1) from Coccidioides immitis (strain RS) (Valley fever fungus).